A 71-amino-acid polypeptide reads, in one-letter code: Large ribosomal subunit protein bL31 (71 aa).

Positions 16, 18, 37, and 40 each coordinate Zn(2+).

It belongs to the bacterial ribosomal protein bL31 family. Type A subfamily. In terms of assembly, part of the 50S ribosomal subunit. Zn(2+) serves as cofactor.

Binds the 23S rRNA. The chain is Large ribosomal subunit protein bL31 from Marinomonas sp. (strain MWYL1).